The chain runs to 130 residues: Ribosome biogenesis inhibitor MINAS-60 (130 aa).

A disordered region spans residues 61–130; that stretch reads SKVQRIPTRP…RRRRPVTSSC (70 aa). Residues 109–130 are compositionally biased toward basic residues; that stretch reads KGRRRRRRMRRRRRRRPVTSSC.

As to quaternary structure, interacts with 60S ribosome assembly factors GTPBP4 and MRTO4.

The protein localises to the nucleus. It localises to the nucleolus. Acts as a late-stage inhibitor of pre-60S ribosome assembly by preventing pre-60S ribosome export from nucleus. The sequence is that of Ribosome biogenesis inhibitor MINAS-60 from Mus musculus (Mouse).